We begin with the raw amino-acid sequence, 605 residues long: Elongation factor 4 (605 aa).

The tr-type G domain maps to 11–193 (KNIRNFSIIA…RLVDVIPAPE (183 aa)). GTP is bound by residues 23 to 28 (DHGKST) and 140 to 143 (NKID).

This sequence belongs to the TRAFAC class translation factor GTPase superfamily. Classic translation factor GTPase family. LepA subfamily.

Its subcellular location is the cell inner membrane. It carries out the reaction GTP + H2O = GDP + phosphate + H(+). In terms of biological role, required for accurate and efficient protein synthesis under certain stress conditions. May act as a fidelity factor of the translation reaction, by catalyzing a one-codon backward translocation of tRNAs on improperly translocated ribosomes. Back-translocation proceeds from a post-translocation (POST) complex to a pre-translocation (PRE) complex, thus giving elongation factor G a second chance to translocate the tRNAs correctly. Binds to ribosomes in a GTP-dependent manner. This Acinetobacter baylyi (strain ATCC 33305 / BD413 / ADP1) protein is Elongation factor 4.